We begin with the raw amino-acid sequence, 144 residues long: Phospholipase A2, membrane associated (144 aa).

A signal peptide spans 1-20; it reads MKTLLLLAVIMAIGLLQVHG. 7 cysteine pairs are disulfide-bonded: Cys46–Cys137, Cys48–Cys64, Cys63–Cys117, Cys69–Cys144, Cys70–Cys110, Cys79–Cys103, and Cys97–Cys108. 3 residues coordinate Ca(2+): Tyr47, Gly49, and Ser51. His67 is a catalytic residue. Asp68 provides a ligand contact to Ca(2+). Residue Asp111 is part of the active site.

Belongs to the phospholipase A2 family. Ca(2+) is required as a cofactor.

It is found in the secreted. Its subcellular location is the cell membrane. The protein localises to the mitochondrion outer membrane. The catalysed reaction is a 1,2-diacyl-sn-glycero-3-phosphoethanolamine + H2O = a 1-acyl-sn-glycero-3-phosphoethanolamine + a fatty acid + H(+). The enzyme catalyses 1-hexadecanoyl-2-(9Z-octadecenoyl)-sn-glycero-3-phosphoethanolamine + H2O = 1-hexadecanoyl-sn-glycero-3-phosphoethanolamine + (9Z)-octadecenoate + H(+). It catalyses the reaction 1-hexadecanoyl-2-(9Z,12Z-octadecadienoyl)-sn-glycero-3-phosphoethanolamine + H2O = 1-hexadecanoyl-sn-glycero-3-phosphoethanolamine + (9Z,12Z)-octadecadienoate + H(+). It carries out the reaction 1-hexadecanoyl-2-(5Z,8Z,11Z,14Z-eicosatetraenoyl)-sn-glycero-3-phosphoethanolamine + H2O = 1-hexadecanoyl-sn-glycero-3-phosphoethanolamine + (5Z,8Z,11Z,14Z)-eicosatetraenoate + H(+). The catalysed reaction is N-hexadecanoyl-1,2-di-(9Z-octadecenoyl)-sn-glycero-3-phosphoethanolamine + H2O = N-hexadecanoyl-1-(9Z-octadecenoyl)-sn-glycero-3-phosphoethanolamine + (9Z)-octadecenoate + H(+). The enzyme catalyses 1,2-dihexadecanoyl-sn-glycero-3-phospho-(1'-sn-glycerol) + H2O = 1-hexadecanoyl-sn-glycero-3-phospho-(1'-sn-glycerol) + hexadecanoate + H(+). It catalyses the reaction 1-hexadecanoyl-2-(9Z-octadecenoyl)-sn-glycero-3-phosphoglycerol + H2O = 1-hexadecanoyl-sn-glycero-3-phosphoglycerol + (9Z)-octadecenoate + H(+). It carries out the reaction 1-hexadecanoyl-2-(9Z-octadecenoyl)-sn-glycero-3-phospho-(1'-sn-glycerol) + H2O = 1-hexadecanoyl-sn-glycero-3-phospho-(1'-sn-glycerol) + (9Z)-octadecenoate + H(+). The catalysed reaction is a 1,2-diacyl-sn-glycero-3-phosphocholine + H2O = a 1-acyl-sn-glycero-3-phosphocholine + a fatty acid + H(+). The enzyme catalyses 1,2-dihexadecanoyl-sn-glycero-3-phosphocholine + H2O = 1-hexadecanoyl-sn-glycero-3-phosphocholine + hexadecanoate + H(+). It catalyses the reaction 1-hexadecanoyl-2-(9Z-octadecenoyl)-sn-glycero-3-phosphocholine + H2O = 1-hexadecanoyl-sn-glycero-3-phosphocholine + (9Z)-octadecenoate + H(+). It carries out the reaction 1-hexadecanoyl-2-(9Z,12Z-octadecadienoyl)-sn-glycero-3-phosphocholine + H2O = (9Z,12Z)-octadecadienoate + 1-hexadecanoyl-sn-glycero-3-phosphocholine + H(+). The catalysed reaction is 1-hexadecanoyl-2-(4Z,7Z,10Z,13Z,16Z,19Z-docosahexaenoyl)-sn-glycero-3-phosphocholine + H2O = (4Z,7Z,10Z,13Z,16Z,19Z)-docosahexaenoate + 1-hexadecanoyl-sn-glycero-3-phosphocholine + H(+). In terms of biological role, secretory calcium-dependent phospholipase A2 that primarily targets extracellular phospholipids with implications in host antimicrobial defense, inflammatory response and tissue regeneration. Hydrolyzes the ester bond of the fatty acyl group attached at sn-2 position of phospholipids (phospholipase A2 activity) with preference for phosphatidylethanolamines and phosphatidylglycerols over phosphatidylcholines. Contributes to lipid remodeling of cellular membranes and generation of lipid mediators involved in pathogen clearance. Displays bactericidal activity against Gram-positive bacteria by directly hydrolyzing phospholipids of the bacterial membrane. Upon sterile inflammation, targets membrane phospholipids of extracellular mitochondria released from activated platelets, generating free unsaturated fatty acids such as arachidonate that is used by neighboring leukocytes to synthesize inflammatory eicosanoids such as leukotrienes. Simultaneously, by compromising mitochondrial membrane integrity, promotes the release in circulation of potent damage-associated molecular pattern molecules that activate the innate immune response. Plays a stem cell regulator role in the intestinal crypt. Within intracellular compartment mediates Paneth cell differentiation and its stem cell supporting functions by inhibiting Wnt signaling pathway in intestinal stem cell (ICS). Secreted in the intestinal lumen upon inflammation, acts in an autocrine way and promotes prostaglandin E2 synthesis that stimulates Wnt signaling pathway in ICS cells and tissue regeneration. May play a role in the biosynthesis of N-acyl ethanolamines that regulate energy metabolism and inflammation. Hydrolyzes N-acyl phosphatidylethanolamines to N-acyl lysophosphatidylethanolamines, which are further cleaved by a lysophospholipase D to release N-acyl ethanolamines. Independent of its catalytic activity, acts as a ligand for integrins. Binds to and activates integrins ITGAV:ITGB3, ITGA4:ITGB1 and ITGA5:ITGB1. Binds to a site (site 2) which is distinct from the classical ligand-binding site (site 1) and induces integrin conformational changes and enhanced ligand binding to site 1. Induces cell proliferation in an integrin-dependent manner. This is Phospholipase A2, membrane associated (PLA2G2A) from Bos taurus (Bovine).